We begin with the raw amino-acid sequence, 117 residues long: Large ribosomal subunit protein uL18 (117 aa).

The protein belongs to the universal ribosomal protein uL18 family. In terms of assembly, part of the 50S ribosomal subunit; part of the 5S rRNA/L5/L18/L25 subcomplex. Contacts the 5S and 23S rRNAs.

In terms of biological role, this is one of the proteins that bind and probably mediate the attachment of the 5S RNA into the large ribosomal subunit, where it forms part of the central protuberance. In Aliivibrio fischeri (strain MJ11) (Vibrio fischeri), this protein is Large ribosomal subunit protein uL18.